Consider the following 190-residue polypeptide: MAAIKPITTYKGKIVPLFNDNIDTDQIIPKVHLKRISKSGFGPFAFDEWRYLPDGSDNPDFNPNKPQYKGASILITGDNFGCGSSREHAAWALKDYGFHIIIAGSFSDIFYMNCTKNAMLPIVLEKNAREHLAKYVEIEVDLPNQTVSSPDKRFHFEIDETWKNKLVNGLDDIAITLQYESLIEKYEKSL.

This sequence belongs to the LeuD family. LeuD type 1 subfamily. As to quaternary structure, heterodimer of LeuC and LeuD.

The enzyme catalyses (2R,3S)-3-isopropylmalate = (2S)-2-isopropylmalate. It functions in the pathway amino-acid biosynthesis; L-leucine biosynthesis; L-leucine from 3-methyl-2-oxobutanoate: step 2/4. Functionally, catalyzes the isomerization between 2-isopropylmalate and 3-isopropylmalate, via the formation of 2-isopropylmaleate. This chain is 3-isopropylmalate dehydratase small subunit, found in Staphylococcus aureus (strain MSSA476).